Consider the following 208-residue polypeptide: Uracil phosphoribosyltransferase (208 aa).

Residues Arg77, Arg102, and 128–136 (DPMLATGGT) each bind 5-phospho-alpha-D-ribose 1-diphosphate. Uracil-binding positions include Ile191 and 196–198 (GDI). Asp197 provides a ligand contact to 5-phospho-alpha-D-ribose 1-diphosphate.

It belongs to the UPRTase family. The cofactor is Mg(2+).

It carries out the reaction UMP + diphosphate = 5-phospho-alpha-D-ribose 1-diphosphate + uracil. It participates in pyrimidine metabolism; UMP biosynthesis via salvage pathway; UMP from uracil: step 1/1. Allosterically activated by GTP. In terms of biological role, catalyzes the conversion of uracil and 5-phospho-alpha-D-ribose 1-diphosphate (PRPP) to UMP and diphosphate. The protein is Uracil phosphoribosyltransferase of Aquifex aeolicus (strain VF5).